Consider the following 126-residue polypeptide: MRSSLLLGLTVVLLLGVTVPPCMAGQALNKLMPKIVSAIIYMIGQPNAGVTFLGHQCLVESTRQPDGFYTAKMWCTSWTSDNPIVGEGRSRVELEALKGSIRNFVQTASDYKKFTIEEVEDWIASY.

The signal sequence occupies residues 1-24 (MRSSLLLGLTVVLLLGVTVPPCMA).

Strongly expressed in gills, hemocytes and reproductive tract, with weaker expression in muscle, heart and digestive tract. Not detected in eyes and hepatopancreas (at protein level).

The protein resides in the secreted. In terms of biological role, has antibacterial activity against the Gram-positive bacteria E.coli (MIC&lt;50 ug/ml) and P.aeruginosa (MIC&lt;25 ug/ml), and the Gram-negative bacteria S.aureus (MIC&lt;100 ug/ml) and S.pyogenes (MIC&lt;50 ug/ml). This chain is Antimicrobial protein 1, found in Scylla serrata (Mud crab).